A 208-amino-acid chain; its full sequence is Large ribosomal subunit protein bL25 (208 aa).

The protein belongs to the bacterial ribosomal protein bL25 family. CTC subfamily. As to quaternary structure, part of the 50S ribosomal subunit; part of the 5S rRNA/L5/L18/L25 subcomplex. Contacts the 5S rRNA. Binds to the 5S rRNA independently of L5 and L18.

In terms of biological role, this is one of the proteins that binds to the 5S RNA in the ribosome where it forms part of the central protuberance. The protein is Large ribosomal subunit protein bL25 of Acidovorax ebreus (strain TPSY) (Diaphorobacter sp. (strain TPSY)).